The chain runs to 208 residues: Protein GrpE (208 aa).

Residues 1–25 (MVDNKDFNEELKENIQEELDNETKA) show a composition bias toward basic and acidic residues. Residues 1–38 (MVDNKDFNEELKENIQEELDNETKAENPNIDEEVEEVS) are disordered. The segment covering 29-38 (NIDEEVEEVS) has biased composition (acidic residues).

The protein belongs to the GrpE family. In terms of assembly, homodimer.

Its subcellular location is the cytoplasm. Functionally, participates actively in the response to hyperosmotic and heat shock by preventing the aggregation of stress-denatured proteins, in association with DnaK and GrpE. It is the nucleotide exchange factor for DnaK and may function as a thermosensor. Unfolded proteins bind initially to DnaJ; upon interaction with the DnaJ-bound protein, DnaK hydrolyzes its bound ATP, resulting in the formation of a stable complex. GrpE releases ADP from DnaK; ATP binding to DnaK triggers the release of the substrate protein, thus completing the reaction cycle. Several rounds of ATP-dependent interactions between DnaJ, DnaK and GrpE are required for fully efficient folding. The protein is Protein GrpE of Clostridium perfringens (strain 13 / Type A).